Reading from the N-terminus, the 70-residue chain is DNA-directed RNA polymerase subunit epsilon (70 aa).

The protein belongs to the RNA polymerase subunit epsilon family. RNAP is composed of a core of 2 alpha, a beta and a beta' subunit. The core is associated with a delta subunit, and at least one of epsilon or omega. When a sigma factor is associated with the core the holoenzyme is formed, which can initiate transcription.

It carries out the reaction RNA(n) + a ribonucleoside 5'-triphosphate = RNA(n+1) + diphosphate. In terms of biological role, a non-essential component of RNA polymerase (RNAP). In Latilactobacillus sakei subsp. sakei (strain 23K) (Lactobacillus sakei subsp. sakei), this protein is DNA-directed RNA polymerase subunit epsilon.